A 276-amino-acid chain; its full sequence is Methylesterase 17 (276 aa).

The AB hydrolase-1 domain maps to 19–138 (PHFVLIHGMS…TDEDMKDGVP (120 aa)). The Acyl-ester intermediate role is filled by serine 95. Catalysis depends on charge relay system residues aspartate 225 and histidine 252.

The protein belongs to the AB hydrolase superfamily. Methylesterase family. Expressed in several tissues of seedlings and adult plants, with a higher relative level of expression in the seedling shoot apex and the adult stem.

The enzyme catalyses methyl (indol-3-yl)acetate + H2O = (indol-3-yl)acetate + methanol + H(+). It functions in the pathway plant hormone biosynthesis. Methylesterase that efficiently and specifically hydrolyzes methyl indole-3-acetic acid (MeIAA) to IAA (auxin). MeIAA is believed to be an inactive form of auxin that needs to be demethylated to exert a biological effect. The sequence is that of Methylesterase 17 from Arabidopsis thaliana (Mouse-ear cress).